A 991-amino-acid polypeptide reads, in one-letter code: Receptor-like protein kinase HAIKU2 (991 aa).

The signal sequence occupies residues M1–S19. The Extracellular segment spans residues R20 to M616. N22 is a glycosylation site (N-linked (GlcNAc...) asparagine). 21 LRR repeats span residues D66–D90, L99–C123, R125–L148, E150–D170, L171–L196, T197–L220, V221–L244, N246–N267, T269–L291, K292–D314, F315–W339, A341–K363, V365–C387, K388–L411, N413–A435, K436–A459, S461–K482, L483–T508, L510–L531, K532–A554, and L555–G578. N-linked (GlcNAc...) asparagine glycans are attached at residues N109, N135, N155, N195, and N206. 2 N-linked (GlcNAc...) asparagine glycosylation sites follow: N267 and N278. N397 and N427 each carry an N-linked (GlcNAc...) asparagine glycan. N-linked (GlcNAc...) asparagine glycosylation occurs at N495. N-linked (GlcNAc...) asparagine glycosylation occurs at N538. The chain crosses the membrane as a helical span at residues C617–I637. Residues R638–V991 lie on the Cytoplasmic side of the membrane. The region spanning I671–Y970 is the Protein kinase domain. ATP-binding positions include I677–V685 and K699. Residues Y762 and Y801 each carry the phosphotyrosine modification. D814 (proton acceptor) is an active-site residue. 2 positions are modified to phosphotyrosine: Y859 and Y866. A Phosphothreonine modification is found at T867. A disordered region spans residues K972–V991.

It belongs to the protein kinase superfamily. Ser/Thr protein kinase family. Expressed in the endosperm of fertilized ovules.

Its subcellular location is the membrane. The catalysed reaction is L-seryl-[protein] + ATP = O-phospho-L-seryl-[protein] + ADP + H(+). It catalyses the reaction L-threonyl-[protein] + ATP = O-phospho-L-threonyl-[protein] + ADP + H(+). Modulates the seed size by negatively regulating the cellularization of syncytial endosperm. The sequence is that of Receptor-like protein kinase HAIKU2 (IKU2) from Arabidopsis thaliana (Mouse-ear cress).